Reading from the N-terminus, the 425-residue chain is Serine--tRNA ligase (425 aa).

232 to 234 (TAE) contacts L-serine. ATP contacts are provided by residues 263 to 265 (RRE) and Val-279. Position 286 (Glu-286) interacts with L-serine. 350-353 (EVVS) serves as a coordination point for ATP. Thr-387 serves as a coordination point for L-serine.

Belongs to the class-II aminoacyl-tRNA synthetase family. Type-1 seryl-tRNA synthetase subfamily. As to quaternary structure, homodimer. The tRNA molecule binds across the dimer.

It is found in the cytoplasm. The catalysed reaction is tRNA(Ser) + L-serine + ATP = L-seryl-tRNA(Ser) + AMP + diphosphate + H(+). It catalyses the reaction tRNA(Sec) + L-serine + ATP = L-seryl-tRNA(Sec) + AMP + diphosphate + H(+). The protein operates within aminoacyl-tRNA biosynthesis; selenocysteinyl-tRNA(Sec) biosynthesis; L-seryl-tRNA(Sec) from L-serine and tRNA(Sec): step 1/1. Its function is as follows. Catalyzes the attachment of serine to tRNA(Ser). Is also able to aminoacylate tRNA(Sec) with serine, to form the misacylated tRNA L-seryl-tRNA(Sec), which will be further converted into selenocysteinyl-tRNA(Sec). This is Serine--tRNA ligase from Methanocorpusculum labreanum (strain ATCC 43576 / DSM 4855 / Z).